The chain runs to 224 residues: Large ribosomal subunit protein bL25 (224 aa).

The interval 190-224 (EPAPAAEGAAPAEGAAAAAAGGKPAAKTAKPAAKK) is disordered.

Belongs to the bacterial ribosomal protein bL25 family. CTC subfamily. Part of the 50S ribosomal subunit; part of the 5S rRNA/L5/L18/L25 subcomplex. Contacts the 5S rRNA. Binds to the 5S rRNA independently of L5 and L18.

Functionally, this is one of the proteins that binds to the 5S RNA in the ribosome where it forms part of the central protuberance. In Variovorax paradoxus (strain S110), this protein is Large ribosomal subunit protein bL25.